The sequence spans 1131 residues: MPTPVAAARQCLSPAAVPALDAAVASSRRRAHAQTTSLHLISSLLAPPAPPLLRDALARARSAAYSPRVQLKALDLCFAVSLDRLPSVSASSSSSGAADEPPVSNSLMAAIKRSQANQRRNPDTFHFYHQAATAQTPAAVKVELSHLVLAILDDPVVSRVFAEAGFRSGDIKLAILRPAPPMPLLGRLPTRTRPPPLFLCSFAAADDADVPSPAGNLAGAGEENCRRIAEILSRGRNPMLVGVGAASAADDFAAASPYRIIHVDPNTIDRSDLGVAAAMASATSGLIISIGDLKQLVPDEDAEAQEKGRRVVAEVTRVLETHSKVGRVWVMGWSATYETYLAFLSKFPLVDKDWDLQLLPITAVHAAATAGPAAAAAGLMPPATTVAAFSKPAASLMDSFVPFGGFLCDNYEENSLTANSCPQALRCQQCNDKYEQEVATIISASGITAEDHHQGGLPSLLQNGSMMGPNNGFDPVKARDDRMVLNSKILNLRKKWNEYCLRLHQDHQRINRDPYKPFPRYIGVPTDKERSANSSKGSESVGVQKDVIKPCAVSAVHSSSTARPISSPSVTNKRNEDLVLNLQARHSKSDENLQERGMQSQHGTLSNVDNPDDHVSPSSAAPVETDLVLGTPRECSSKGSSSTCSKRVEDSERSVHLVPKKVDDLNLKHPQLSVQPNSCSWSSINVGKTSHSTLHSVASGGFSAFGQWQKRSPLAAQNSDLSNYKLLVERLFKVVGRQEEALSAICESIVRCRSTESRRGPNRNDIWLCFHGSDSMAKKRIAVALAELMHGSKDNLIYLDLNLQDWDDSSFRGKTGIDCIVEQLSKKRQSVLFLDNIDRADCLVQDSLSDAIKSGRFQDMRGKVVDINDSIVVLSRSMIQGSKNGLEEGLSFSEEKILATRGHRLKILVEPGRAITSGCPSGKVVVSPRHFLTKIQASLCSGSISKRKLSISDDQEKLQESPSSSKRLHRTSSVPFDLNLPVDEDEPLDADDDSSSHENSYGNTEKSIDALLHSVDGSINFKPFDFDKLADDMLQEFSNILRKNLGSECMLEIDVGAMEQILAAAWKSEEDRKPVPTWLEQVFARSLDELKLKRKHVSSSTLRLVACEDTVPAVKGDGLGVLLPPRIILDC.

One can recognise a Clp R domain in the interval 8–181 (ARQCLSPAAV…KLAILRPAPP (174 aa)). 2 repeat regions span residues 12 to 85 (LSPA…LDRL) and 103 to 181 (VSNS…PAPP). The disordered stretch occupies residues 511–574 (NRDPYKPFPR…ISSPSVTNKR (64 aa)). Residues 558–569 (SSSTARPISSPS) show a composition bias toward low complexity. The EAR 1 motif lies at 578 to 582 (LVLNL). Positions 588-655 (KSDENLQERG…KRVEDSERSV (68 aa)) are disordered. Positions 597–609 (GMQSQHGTLSNVD) are enriched in polar residues. A compositionally biased stretch (basic and acidic residues) spans 646 to 655 (KRVEDSERSV). The EAR 2 motif lies at 799 to 803 (LDLNL). Disordered regions lie at residues 951–970 (ISDD…RLHR) and 976–1002 (FDLN…NSYG). Positions 976-981 (FDLNLP) match the EAR 3 motif. Over residues 982–993 (VDEDEPLDADDD) the composition is skewed to acidic residues.

This sequence belongs to the ClpA/ClpB family. In terms of assembly, interacts with D3. Interacts with D14. The interaction with D14 is enhanced in the presence of strigolactones. The interaction with D14 occurs in the presence of (2'R) stereoisomers of strigolactones, but not (2'S) stereoisomers. Interacts with the TOPLESS-related proteins TPR1, TPR2 and TPR3. Interacts with SPL14/IPA1. Post-translationally, polyubiquitinated. Strigolactone, but not karrikin, triggers rapid SCF(D3)-dependent degradation via the proteasome. Expressed in the shoot bases of seedlings, young leaves, axillary buds and young panicles. Expressed in young roots vasculature, culms, internodes and nodes, preferentially in the parenchyma cells surrounding the xylem.

It localises to the nucleus. Repressor of strigolactones (SL) signaling. Subjected to a negative feedback control of SL signaling. Suppresses the transcriptional activation activity of SPL14/IPA1 in SL signaling. Acts with SPL14/IPA1 to mediate the SL-regulated tiller development. Subject to a negative feedback regulation by SPL14/IPA1, which binds to D53 promoter to repress D53 gene expression. The polypeptide is Protein DWARF 53 (Oryza sativa subsp. japonica (Rice)).